Reading from the N-terminus, the 554-residue chain is Phenylalanine--tRNA ligase beta subunit (554 aa).

Positions 276-351 constitute a B5 domain; the sequence is LTPKSRMISV…INYGYEKFEG (76 aa). The Mg(2+) site is built by D329, D335, E338, and E339.

This sequence belongs to the phenylalanyl-tRNA synthetase beta subunit family. Type 2 subfamily. In terms of assembly, tetramer of two alpha and two beta subunits. Mg(2+) serves as cofactor.

The protein localises to the cytoplasm. It carries out the reaction tRNA(Phe) + L-phenylalanine + ATP = L-phenylalanyl-tRNA(Phe) + AMP + diphosphate + H(+). In Methanococcus maripaludis (strain C6 / ATCC BAA-1332), this protein is Phenylalanine--tRNA ligase beta subunit.